The chain runs to 127 residues: Glycine cleavage system H protein (127 aa).

Residues 22 to 104 enclose the Lipoyl-binding domain; that stretch reads KARIGITHFA…YEKAWMIVVE (83 aa). Residue K63 is modified to N6-lipoyllysine.

The protein belongs to the GcvH family. In terms of assembly, the glycine cleavage system is composed of four proteins: P, T, L and H. Requires (R)-lipoate as cofactor.

Its function is as follows. The glycine cleavage system catalyzes the degradation of glycine. The H protein shuttles the methylamine group of glycine from the P protein to the T protein. Functionally, is also involved in protein lipoylation via its role as an octanoyl/lipoyl carrier protein intermediate. In Bacillus subtilis (strain 168), this protein is Glycine cleavage system H protein.